Reading from the N-terminus, the 88-residue chain is MARSLKKGPFVDENLFKKVTSAKDGEVIKTWSRRSTIFPEFIGKTFGVYNGKEFIPVYITEDMVGNKLGEFAPTRKFGGHGDDKGKKK.

The protein belongs to the universal ribosomal protein uS19 family.

Functionally, protein S19 forms a complex with S13 that binds strongly to the 16S ribosomal RNA. The chain is Small ribosomal subunit protein uS19 (rpsS) from Mycoplasma capricolum subsp. capricolum (strain California kid / ATCC 27343 / NCTC 10154).